A 541-amino-acid polypeptide reads, in one-letter code: CTP synthase (541 aa).

The amidoligase domain stretch occupies residues methionine 1–leucine 268. Serine 13 contacts CTP. Serine 13 lines the UTP pocket. ATP-binding positions include glycine 14 to isoleucine 19 and aspartate 71. 2 residues coordinate Mg(2+): aspartate 71 and glutamate 141. Residues aspartate 148–glutamate 150, lysine 189–glutamine 194, and lysine 225 contribute to the CTP site. UTP-binding positions include lysine 189–glutamine 194 and lysine 225. The Glutamine amidotransferase type-1 domain occupies glutamate 293–glycine 539. Glycine 359 lines the L-glutamine pocket. Cysteine 386 (nucleophile; for glutamine hydrolysis) is an active-site residue. L-glutamine-binding positions include methionine 387 to glutamine 390, glutamate 410, and arginine 467. Catalysis depends on residues histidine 512 and glutamate 514.

This sequence belongs to the CTP synthase family. In terms of assembly, homotetramer.

The enzyme catalyses UTP + L-glutamine + ATP + H2O = CTP + L-glutamate + ADP + phosphate + 2 H(+). It catalyses the reaction L-glutamine + H2O = L-glutamate + NH4(+). It carries out the reaction UTP + NH4(+) + ATP = CTP + ADP + phosphate + 2 H(+). Its pathway is pyrimidine metabolism; CTP biosynthesis via de novo pathway; CTP from UDP: step 2/2. Allosterically activated by GTP, when glutamine is the substrate; GTP has no effect on the reaction when ammonia is the substrate. The allosteric effector GTP functions by stabilizing the protein conformation that binds the tetrahedral intermediate(s) formed during glutamine hydrolysis. Inhibited by the product CTP, via allosteric rather than competitive inhibition. In terms of biological role, catalyzes the ATP-dependent amination of UTP to CTP with either L-glutamine or ammonia as the source of nitrogen. Regulates intracellular CTP levels through interactions with the four ribonucleotide triphosphates. In Symbiobacterium thermophilum (strain DSM 24528 / JCM 14929 / IAM 14863 / T), this protein is CTP synthase.